Reading from the N-terminus, the 318-residue chain is Pantothenate synthetase (318 aa).

44 to 51 (MGALHQGH) lines the ATP pocket. The active-site Proton donor is His-51. Gln-75 is a (R)-pantoate binding site. Gln-75 contributes to the beta-alanine binding site. ATP is bound at residue 161–164 (GEKD). Gln-167 lines the (R)-pantoate pocket. ATP-binding positions include Val-190 and 198-201 (LSSR). A disordered region spans residues 295-318 (DGHPNLDSQPEPAGTDPALLPPAR).

Belongs to the pantothenate synthetase family. As to quaternary structure, homodimer.

The protein localises to the cytoplasm. It carries out the reaction (R)-pantoate + beta-alanine + ATP = (R)-pantothenate + AMP + diphosphate + H(+). It functions in the pathway cofactor biosynthesis; (R)-pantothenate biosynthesis; (R)-pantothenate from (R)-pantoate and beta-alanine: step 1/1. Its function is as follows. Catalyzes the condensation of pantoate with beta-alanine in an ATP-dependent reaction via a pantoyl-adenylate intermediate. The protein is Pantothenate synthetase of Nocardia farcinica (strain IFM 10152).